A 135-amino-acid chain; its full sequence is Phosphoribosyl-AMP cyclohydrolase (135 aa).

Mg(2+) is bound at residue Asp89. Cys90 contacts Zn(2+). Asp91 and Asp93 together coordinate Mg(2+). Zn(2+)-binding residues include Cys106 and Cys113.

The protein belongs to the PRA-CH family. As to quaternary structure, homodimer. Mg(2+) serves as cofactor. It depends on Zn(2+) as a cofactor.

The protein resides in the cytoplasm. The enzyme catalyses 1-(5-phospho-beta-D-ribosyl)-5'-AMP + H2O = 1-(5-phospho-beta-D-ribosyl)-5-[(5-phospho-beta-D-ribosylamino)methylideneamino]imidazole-4-carboxamide. The protein operates within amino-acid biosynthesis; L-histidine biosynthesis; L-histidine from 5-phospho-alpha-D-ribose 1-diphosphate: step 3/9. Its function is as follows. Catalyzes the hydrolysis of the adenine ring of phosphoribosyl-AMP. In Bifidobacterium adolescentis (strain ATCC 15703 / DSM 20083 / NCTC 11814 / E194a), this protein is Phosphoribosyl-AMP cyclohydrolase.